The primary structure comprises 832 residues: pre-rRNA 2'-O-ribose RNA methyltransferase FTSJ3 (832 aa).

Positions 56, 58, 76, 92, and 117 each coordinate S-adenosyl-L-methionine. Lysine 157 (proton acceptor) is an active-site residue. 3 disordered regions span residues 332–358 (INLSSGEEEEGREEEEKTSPKAAADEM), 485–523 (RLERERREQGVKRVKPKVEEEEEEEEEEENPLLVPLEEK), and 546–631 (DADE…GLVE). 2 stretches are compositionally biased toward basic and acidic residues: residues 345 to 358 (EEEKTSPKAAADEM) and 485 to 495 (RLERERREQGV). A compositionally biased stretch (acidic residues) spans 503 to 514 (EEEEEEEEEEEN). Over residues 570-579 (KTKKKGQKKK) the composition is skewed to basic residues. Over residues 600-618 (AEAEAEQSSDDDSSSDEEG) the composition is skewed to acidic residues. Residues 726-758 (IKKVAEAKARKKRRMLKKMEQMKKKAEAVVSTV) adopt a coiled-coil conformation. Positions 795 to 832 (GPRVRRPPGVKGQFKVVDSRLKKDVRAQKRKEQKKRRK) are disordered. Over residues 811-821 (VDSRLKKDVRA) the composition is skewed to basic and acidic residues. Over residues 822-832 (QKRKEQKKRRK) the composition is skewed to basic residues.

The protein belongs to the class I-like SAM-binding methyltransferase superfamily. RNA methyltransferase RlmE family. SPB1 subfamily. As to quaternary structure, interacts with NIP7.

It localises to the nucleus. The protein localises to the nucleolus. It catalyses the reaction a ribonucleotide in rRNA + S-adenosyl-L-methionine = a 2'-O-methylribonucleotide in rRNA + S-adenosyl-L-homocysteine + H(+). RNA 2'-O-methyltransferase involved in the processing of the 34S pre-rRNA to 18S rRNA and in 40S ribosomal subunit formation. This Gallus gallus (Chicken) protein is pre-rRNA 2'-O-ribose RNA methyltransferase FTSJ3.